We begin with the raw amino-acid sequence, 344 residues long: MAETRRKVLEVLNGKSLTPPPIWLMRQAGRYLPEYRATRAKAGSFLDLCYTPDLAVEVTLQPIRRYAFDAAILFSDILVIPDALHRNVRFEEGHGPRMDPIDTDGIAGLKADGILSHLSPVFETVARLRRELPEETTLLGFCGAPWTVATYMIAGRGTPDQAPARLFAYRHPKAFEELLAFLADVSADYLVAQIDAGADAVQIFDSWAGVLGEDEFARFAVEPVRRMIASVRARRPSAKIIAFAKGAGLLLKDYRRLTGADAIGLDWAVPLAFAAELQKDGPVQGNLDPMRVVAGGGAMESGIDRILDVLGNGPLIFNLGHGITPEADPENVSALVARVRGTKG.

Residues 26–30 (RQAGR), Asp76, Tyr151, Ser206, and His321 contribute to the substrate site.

This sequence belongs to the uroporphyrinogen decarboxylase family. Homodimer.

The protein resides in the cytoplasm. It catalyses the reaction uroporphyrinogen III + 4 H(+) = coproporphyrinogen III + 4 CO2. It participates in porphyrin-containing compound metabolism; protoporphyrin-IX biosynthesis; coproporphyrinogen-III from 5-aminolevulinate: step 4/4. In terms of biological role, catalyzes the decarboxylation of four acetate groups of uroporphyrinogen-III to yield coproporphyrinogen-III. This chain is Uroporphyrinogen decarboxylase, found in Sinorhizobium fredii (strain NBRC 101917 / NGR234).